We begin with the raw amino-acid sequence, 277 residues long: S-formylglutathione hydrolase FrmB (277 aa).

Active-site charge relay system residues include S145, D221, and H254.

It belongs to the esterase D family.

The catalysed reaction is S-formylglutathione + H2O = formate + glutathione + H(+). In terms of biological role, serine hydrolase involved in the detoxification of formaldehyde. Hydrolyzes S-formylglutathione to glutathione and formate. The chain is S-formylglutathione hydrolase FrmB (frmB) from Escherichia coli (strain K12 / DH10B).